We begin with the raw amino-acid sequence, 344 residues long: tRNA N6-adenosine threonylcarbamoyltransferase (344 aa).

Positions 112 and 116 each coordinate Fe cation. Residues 135–139 (LVSGG), D168, G181, and N271 contribute to the substrate site. Residue D299 coordinates Fe cation. Residues 323-344 (RARPRWPLDPEAEPVRGAGVKA) are disordered.

This sequence belongs to the KAE1 / TsaD family. It depends on Fe(2+) as a cofactor.

The protein resides in the cytoplasm. It catalyses the reaction L-threonylcarbamoyladenylate + adenosine(37) in tRNA = N(6)-L-threonylcarbamoyladenosine(37) in tRNA + AMP + H(+). Its function is as follows. Required for the formation of a threonylcarbamoyl group on adenosine at position 37 (t(6)A37) in tRNAs that read codons beginning with adenine. Is involved in the transfer of the threonylcarbamoyl moiety of threonylcarbamoyl-AMP (TC-AMP) to the N6 group of A37, together with TsaE and TsaB. TsaD likely plays a direct catalytic role in this reaction. This chain is tRNA N6-adenosine threonylcarbamoyltransferase, found in Erythrobacter litoralis (strain HTCC2594).